A 1480-amino-acid chain; its full sequence is UDP-N-acetylglucosamine--peptide N-acetylglucosaminyltransferase (1480 aa).

TPR repeat units lie at residues 38–71 (IFLYAIQGEISFKQKDWIQAFAAYEKAVAESKQK), 113–146 (VQVLAQLALLYLMCERYSEAEKLLSSIVESSTSN), 176–209 (ATILNNLAICNSKLGNHTLAFDQFQQALDIIKDP), and 288–321 (STICYNIGKLELTLGNLDRSVNHFKKSIEYQPSF). A compositionally biased stretch (basic and acidic residues) spans 468 to 485 (PQEKESPKSDKIASEKPL). Positions 468–497 (PQEKESPKSDKIASEKPLVESNPGRSRTPS) are disordered. TPR repeat units follow at residues 613 to 646 (YEPFYNLGNILKADEENKKALQYYSRAIELNPRF) and 648 to 680 (DGYLARGVLYAELHRFETAYLDFSKCIELDPDN). Residues 1093–1128 (LSLDGSDATSSSVDSGIGSRTHSEAPIGGGDKDEGA) are disordered. Positions 1099–1112 (DATSSSVDSGIGSR) are enriched in polar residues. UDP-binding positions include Gln-1269, Lys-1272, 1333-1336 (HIRR), 1351-1353 (GST), and Asp-1357.

It belongs to the glycosyltransferase 41 family. O-GlcNAc transferase subfamily.

Its subcellular location is the cytoplasm. The protein localises to the nucleus. It catalyses the reaction L-seryl-[protein] + UDP-N-acetyl-alpha-D-glucosamine = 3-O-(N-acetyl-beta-D-glucosaminyl)-L-seryl-[protein] + UDP + H(+). The catalysed reaction is L-threonyl-[protein] + UDP-N-acetyl-alpha-D-glucosamine = 3-O-(N-acetyl-beta-D-glucosaminyl)-L-threonyl-[protein] + UDP + H(+). The protein operates within protein modification; protein glycosylation. Its function is as follows. Catalyzes the transfer of a single N-acetylglucosamine from UDP-GlcNAc to a serine or threonine residue in cytoplasmic and nuclear proteins resulting in their modification with a beta-linked N-acetylglucosamine (O-GlcNAc). This chain is UDP-N-acetylglucosamine--peptide N-acetylglucosaminyltransferase, found in Giardia intestinalis (strain ATCC 50803 / WB clone C6) (Giardia lamblia).